A 286-amino-acid chain; its full sequence is ATP synthase gamma chain (286 aa).

Belongs to the ATPase gamma chain family. F-type ATPases have 2 components, CF(1) - the catalytic core - and CF(0) - the membrane proton channel. CF(1) has five subunits: alpha(3), beta(3), gamma(1), delta(1), epsilon(1). CF(0) has three main subunits: a, b and c.

It localises to the cell inner membrane. Its function is as follows. Produces ATP from ADP in the presence of a proton gradient across the membrane. The gamma chain is believed to be important in regulating ATPase activity and the flow of protons through the CF(0) complex. In Alcanivorax borkumensis (strain ATCC 700651 / DSM 11573 / NCIMB 13689 / SK2), this protein is ATP synthase gamma chain.